The sequence spans 108 residues: Cytochrome c oxidase subunit 1 (108 aa).

Residues 10-30 (AFVAPVLGLLGFIPGGAGGIV) form a helical membrane-spanning segment. Histidine 49 serves as a coordination point for heme a3. A run of 2 helical transmembrane segments spans residues 50–70 (FHLQ…YWLL) and 85–105 (LGLA…VGLH). Histidine 51 is a binding site for Fe(II)-heme a.

Belongs to the heme-copper respiratory oxidase family. Requires heme as cofactor. Cu cation is required as a cofactor.

It localises to the cell membrane. It catalyses the reaction 4 Fe(II)-[cytochrome c] + O2 + 8 H(+)(in) = 4 Fe(III)-[cytochrome c] + 2 H2O + 4 H(+)(out). It functions in the pathway energy metabolism; oxidative phosphorylation. This is Cytochrome c oxidase subunit 1 (cbaA) from Thermus thermophilus.